The following is an 868-amino-acid chain: Spindle and centriole-associated protein 1 (868 aa).

Disordered stretches follow at residues 129-154, 172-201, 229-250, and 291-326; these read RTGFPNVTMAPGSSRSPAGINQDPGT, DDGGAESTAHSQSEDSESELPNSLSPHSNR, IAAQSQRTPPGSPSSELSAEDQ, and KPLLSKVKRKQDMRALSKQKKNMLSSSTTSADLASS. Composition is skewed to polar residues over residues 190-200 and 229-245; these read ELPNSLSPHSN and IAAQSQRTPPGSPSSEL. The residue at position 236 (Thr236) is a Phosphothreonine. Residue Ser240 is modified to Phosphoserine. Residues 315-326 show a composition bias toward low complexity; the sequence is SSSTTSADLASS. Residues 381 to 434 are a coiled coil; that stretch reads RYLKESETQLRKEVETRQQLEQMLGDHRELIDALTAEILLLREENGAVQARLQQ. 2 disordered regions span residues 630–664 and 702–722; these read PQFVSLSQPPCSSPPSTQQSRNPVFSEEPTVLGDG and SSGGEHGDGLREPSRQGNASE. Residues 634-649 show a composition bias toward low complexity; that stretch reads SLSQPPCSSPPSTQQS. Position 655 is a phosphoserine (Ser655). A compositionally biased stretch (basic and acidic residues) spans 706–715; the sequence is EHGDGLREPS. Residues 736–764 are a coiled coil; it reads SSMEERIAELNRQSMEARSKLLQLIEQQK. A phosphoserine mark is found at Ser772, Ser773, Ser776, and Ser831. Positions 805-868 are disordered; that stretch reads SSKCNTVSPV…GWFALSAHLP (64 aa). A compositionally biased stretch (low complexity) spans 812–831; it reads SPVSGVSSRRSSGAISNSCS.

In terms of assembly, interacts with CEP120.

The protein localises to the cytoplasm. It localises to the cytoskeleton. The protein resides in the microtubule organizing center. Its subcellular location is the centrosome. It is found in the centriole. The protein localises to the spindle. Regulator required for centriole duplication, for proper bipolar spindle formation and chromosome congression in mitosis. This is Spindle and centriole-associated protein 1 (Spice1) from Rattus norvegicus (Rat).